Reading from the N-terminus, the 541-residue chain is Forkhead box protein O (541 aa).

Residues 118–150 are compositionally biased toward polar residues; that stretch reads NEQCGQLGGASSNGSTAMLHTPDGSNSHQTSFP. Disordered stretches follow at residues 118-168 and 252-291; these read NEQC…GKKT and WVINPDAKPGRNPRRTRERSNTIETTTKAQLEKSRRGAKK. Residues 175–268 constitute a DNA-binding region (fork-head); that stretch reads WGNMSYAELI…KPGRNPRRTR (94 aa). The residue at position 273 (threonine 273) is a Phosphothreonine. Serine 319 carries the post-translational modification Phosphoserine; by CaMK2.

In terms of assembly, interacts with rle-1. Interacts with unc-43 and tax-6. Interacts with jnk-1. Interacts with ftt-2. Interacts with prmt-1. Interacts with hcf-1. Phosphorylated by akt-1 and/or akt-2. Phosphorylated by sgk-1. Phosphorylated by unc-43. Phosphorylated by jnk-1. Dephosphorylated by tax-6 in vitro. In terms of processing, ubiquitinated. Ubiquitination by rle-1 leads to proteasome-mediated degradation. Post-translationally, methylation by prmt-1 prevents phosphorylation and promotes translocation to the nucleus to allow for daf-16-dependent transcription. In terms of tissue distribution, isoform b and isoform c are expressed in ectoderm, muscles, intestine and neurons. Isoform b is also expressed in the pharynx. The intestine appears to be the primary site of longevity function.

The protein localises to the nucleus. The protein resides in the cytoplasm. Its function is as follows. Forkhead-type transcription factor. Binds to the promoters of genes that contain the daf-16/FOXO binding element (DBE), TTGTTTAC, in their regulatory region. Functions in the Insulin/IGF-1-like signaling (IIS) mediated pathway which affects lipogenesis, lifespan, starvation survival, heat shock and oxidative stress responses, sleep, associative memory, and dauer formation. Longevity signaling predominantly arises from expression in the intestine. Acts in the intestine to mediate the role of slo-1 in age-associated decline in motor activity and longevity. Transcriptional activity of daf-16/FOXO is negatively regulated by interaction with host cell factor homolog hcf-1; and by cytoplasmic sequestration by association with ftt-2. Inhibition is required for the carbon dioxide (CO2) avoidance response. Upon loss of inhibition, daf-16 translocates to the nucleus to regulate genes that result in delayed reproduction and growth while increasing stress resistance starvation tolerance and longevity. Association with arginine methyltransferase prmt-1 prevents phosphorylation and allows for translocation to the nucleus and the subsequent transcription of longevity-related genes. Modulation of its activity by cGMP levels in sensory neurons regulates lifespan. Has a protective role against muscle dystrophy. Involved in mediating protection against aberrant protein aggregation proteotoxicity. Influences transcription of genes that code for proteins involved in immunity as part of a general stress response. Targets genes that inhibit and stimulate tumor growth. Targets kinases, phosphatases and transcription factors that are primarily involved in signaling and gene regulation. Thought to regulate ins-7 in FOXO-to-FOXO signaling, which coordinates daf-16 expression. Activity is positively regulated by shc-1-mediated inhibition of daf-2 and activation of JNK pathway. Through the regulation of its activity by shc-1-mediated inhibition of daf-2 and activation of JNK pathway, plays a role in maintaining the integrity of the gonad. Functions by indirect interaction with jnk-1 of the mitogen-activated protein kinase (MAPK) pathway. Involved in increased proteasome activity by activating expression of rpn-6.1 in response to proteotoxic stress, leading to enhanced assembly of the 26S proteasome, followed by higher proteasome activity. Also regulates proteasome activity in the intestine by preventing expression of deubiquitinase ubh-4. Represses transcription of natc-1. Involved in regulation of srh-234 expression. Binds to the promoter of the AMPK-gamma regulatory subunit, aakg-4, and activates its transcription. Also activates transcription of AMPK-gamma regulatory subunit, aakg-1. Maintains endoplasmic reticulum (ER) function by inducing protein degradation and elimination to remove misfolded secretory proteins from the ER independently of the ire-1/xbp-1 unfolded protein response pathway. Regulates epidermal innate immunity to nematophagous fungal infection and physical wounding which trigger bli-3 induced ROS release, leading to daf-16 activation independently of daf-2 signaling. May negatively regulate resistance to stress caused by oxidized cholesterol adducts by preventing the activation of daf-9 and nuclear hormone receptor daf-12, two members of the steroid signaling pathway. Promotes apoptosis during embryonic development. Probably through the regulation of the autophagy genes atg-18 and atg-16.2, plays a role in regulating stem cell number in the germline during larval development. Plays a role in learning and memory; including associative memory, and aversive gustatory associated learning known as salt avoidance learning. Plays a role in regulating gene transcription in response to white light exposure. Binds to the promoter of dex-1 to positively regulate its expression in seam cells during the dauer phase. Plays a role in transgenerational lipid accumulation in response to a high-fat diet. Functionally, functions in the Insulin/IGF-1-like signaling (IIS) mediated pathway. May play a role in lifespan modulation, but less significant than that played by isoforms d and f. In terms of biological role, functions in the Insulin/IGF-1-like signaling (IIS) mediated pathway. Transcript level in the early adult may play a role in lifespan modulation, but effect is more significant than that played by isoform a. The protein is Forkhead box protein O of Caenorhabditis elegans.